A 441-amino-acid polypeptide reads, in one-letter code: Chromosome partition protein MukF (441 aa).

The segment at 208–236 is leucine-zipper; the sequence is LDETSGNLRELQDTLNAAGDKLQAQLLRI.

The protein belongs to the MukF family. As to quaternary structure, interacts, and probably forms a ternary complex, with MukE and MukB via its C-terminal region. The complex formation is stimulated by calcium or magnesium. It is required for an interaction between MukE and MukB.

It is found in the cytoplasm. Its subcellular location is the nucleoid. Its function is as follows. Involved in chromosome condensation, segregation and cell cycle progression. May participate in facilitating chromosome segregation by condensation DNA from both sides of a centrally located replisome during cell division. Not required for mini-F plasmid partitioning. Probably acts via its interaction with MukB and MukE. Overexpression results in anucleate cells. It has a calcium binding activity. In Pasteurella multocida (strain Pm70), this protein is Chromosome partition protein MukF.